The sequence spans 265 residues: Tyrosine protein kinase-interacting protein (265 aa).

Residues 1–14 show a composition bias toward acidic residues; the sequence is MANEGEEIELTEFP. Positions 1–49 are disordered; sequence MANEGEEIELTEFPETEKERKDEEKLSSCSEETTDTSSSSSSDHVPAPI. Topologically, residues 1–238 are cytoplasmic; the sequence is MANEGEEIEL…LKRLENKVNA (238 aa). The segment covering 15–26 has biased composition (basic and acidic residues); that stretch reads ETEKERKDEEKL. Low complexity predominate over residues 27 to 43; that stretch reads SSCSEETTDTSSSSSSD. At tyrosine 123 the chain carries Phosphotyrosine; by host LCK. Residue tyrosine 136 is modified to Phosphotyrosine; by host. The CSKH/LBD2 stretch occupies residues 155–164; sequence EDLQSFLEKY. The disordered stretch occupies residues 172-192; that stretch reads KRDLSATWDPGMPTPALPPRP. The tract at residues 183 to 192 is SH3B/LBD1; it reads MPTPALPPRP. The segment covering 183–192 has biased composition (pro residues); sequence MPTPALPPRP. An SH3 binding region spans residues 225-234; the sequence is IVKDLKRLEN. Residues 239–259 form a helical membrane-spanning segment; the sequence is IICLVVVILAVLLLVTVLSIL. At 260-265 the chain is on the extracellular side; it reads HIGMKS.

Binds host LCK, human WDR48 and human NXF1/TAP. Forms a complex with activated LCK and STAT1 and STAT3. In terms of processing, phosphorylation on Tyr-123 acts as a docking site for the recruitment of STATs 1 and 3.

It is found in the host cell membrane. Plays a critical role in virus induced T-cell transformation. Binds to T-cell-specific tyrosine kinase LCK SH2 and SH3 domains, thereby activating its kinase activity. Once phosphorylated by host LCK, forms a complex with at least STAT 1 and 3, resulting on the phosphorylation of STAT3 and presumably STAT1, and their migration into the nucleus to induce transcription of target genes. Stimulates host ILF3/NF-AT-90 activity. Association with host NXF1/TAP transduces the signal up-regulating surface expression of adhesion molecules as well as activating NF-kappa-B activity. Acts synergistically with StpC to stimulate NF-kappa-B activity and interleukin-2 gene expression. Activation of NF-kappa-B protects lymphocytes from apoptosis, thereby facilitating viral induced cell transformation. May cause down-regulation of host LCK and cell apoptosis when stably overexpressed ex vivo. Interaction with WDR48 induce degradation of T-cell receptor in a lysosome-dependent fashion, when both proteins are overexpressed. The biological effect of this interaction remains controversial since no T-cell receptor degradation is observed in infected cells. The chain is Tyrosine protein kinase-interacting protein from Saimiriine herpesvirus 2 (strain 484) (SaHV-2).